A 566-amino-acid polypeptide reads, in one-letter code: Proline--tRNA ligase (566 aa).

It belongs to the class-II aminoacyl-tRNA synthetase family. ProS type 1 subfamily. In terms of assembly, homodimer.

It localises to the cytoplasm. It carries out the reaction tRNA(Pro) + L-proline + ATP = L-prolyl-tRNA(Pro) + AMP + diphosphate. Catalyzes the attachment of proline to tRNA(Pro) in a two-step reaction: proline is first activated by ATP to form Pro-AMP and then transferred to the acceptor end of tRNA(Pro). As ProRS can inadvertently accommodate and process non-cognate amino acids such as alanine and cysteine, to avoid such errors it has two additional distinct editing activities against alanine. One activity is designated as 'pretransfer' editing and involves the tRNA(Pro)-independent hydrolysis of activated Ala-AMP. The other activity is designated 'posttransfer' editing and involves deacylation of mischarged Ala-tRNA(Pro). The misacylated Cys-tRNA(Pro) is not edited by ProRS. The chain is Proline--tRNA ligase from Shouchella clausii (strain KSM-K16) (Alkalihalobacillus clausii).